The following is a 479-amino-acid chain: Bifunctional protein HldE (479 aa).

The segment at methionine 1–isoleucine 322 is ribokinase. Asparagine 198 to glutamate 201 contributes to the ATP binding site. Aspartate 267 is a catalytic residue. Residues phenylalanine 350–threonine 479 are cytidylyltransferase.

In the N-terminal section; belongs to the carbohydrate kinase PfkB family. This sequence in the C-terminal section; belongs to the cytidylyltransferase family. Homodimer.

The enzyme catalyses D-glycero-beta-D-manno-heptose 7-phosphate + ATP = D-glycero-beta-D-manno-heptose 1,7-bisphosphate + ADP + H(+). It carries out the reaction D-glycero-beta-D-manno-heptose 1-phosphate + ATP + H(+) = ADP-D-glycero-beta-D-manno-heptose + diphosphate. It functions in the pathway nucleotide-sugar biosynthesis; ADP-L-glycero-beta-D-manno-heptose biosynthesis; ADP-L-glycero-beta-D-manno-heptose from D-glycero-beta-D-manno-heptose 7-phosphate: step 1/4. The protein operates within nucleotide-sugar biosynthesis; ADP-L-glycero-beta-D-manno-heptose biosynthesis; ADP-L-glycero-beta-D-manno-heptose from D-glycero-beta-D-manno-heptose 7-phosphate: step 3/4. Catalyzes the phosphorylation of D-glycero-D-manno-heptose 7-phosphate at the C-1 position to selectively form D-glycero-beta-D-manno-heptose-1,7-bisphosphate. In terms of biological role, catalyzes the ADP transfer from ATP to D-glycero-beta-D-manno-heptose 1-phosphate, yielding ADP-D-glycero-beta-D-manno-heptose. This Azorhizobium caulinodans (strain ATCC 43989 / DSM 5975 / JCM 20966 / LMG 6465 / NBRC 14845 / NCIMB 13405 / ORS 571) protein is Bifunctional protein HldE.